Consider the following 218-residue polypeptide: 3-dehydroquinate dehydratase (218 aa).

3-dehydroquinate contacts are provided by residues 29 to 31 (EFR) and R56. Residue H116 is the Proton donor/acceptor of the active site. K142 acts as the Schiff-base intermediate with substrate in catalysis. Residues R180, S200, and Q204 each coordinate 3-dehydroquinate.

Belongs to the type-I 3-dehydroquinase family. In terms of assembly, homodimer.

The enzyme catalyses 3-dehydroquinate = 3-dehydroshikimate + H2O. Its pathway is metabolic intermediate biosynthesis; chorismate biosynthesis; chorismate from D-erythrose 4-phosphate and phosphoenolpyruvate: step 3/7. Its function is as follows. Involved in the third step of the chorismate pathway, which leads to the biosynthesis of aromatic amino acids. Catalyzes the cis-dehydration of 3-dehydroquinate (DHQ) and introduces the first double bond of the aromatic ring to yield 3-dehydroshikimate. This Methanococcus maripaludis (strain DSM 14266 / JCM 13030 / NBRC 101832 / S2 / LL) protein is 3-dehydroquinate dehydratase.